The following is a 227-amino-acid chain: Cytochrome c oxidase subunit 2 (227 aa).

Topologically, residues 1–14 (MAYPFQLGLQDATS) are mitochondrial intermembrane. Residues 15 to 45 (PIMEELTNFHDHTLMIVFLISSLVLYLISLM) traverse the membrane as a helical segment. Residues 46 to 59 (LSTKLIHTSTMDAQ) are Mitochondrial matrix-facing. Residues 60–87 (EVETIWTILPAIILIMIALPSLRILYMM) form a helical membrane-spanning segment. Over 88–227 (DEINNPALTV…LFENWSISMS (140 aa)) the chain is Mitochondrial intermembrane. Cu cation-binding residues include H161, C196, E198, C200, H204, and M207. Residue E198 participates in Mg(2+) binding.

This sequence belongs to the cytochrome c oxidase subunit 2 family. As to quaternary structure, component of the cytochrome c oxidase (complex IV, CIV), a multisubunit enzyme composed of 14 subunits. The complex is composed of a catalytic core of 3 subunits MT-CO1, MT-CO2 and MT-CO3, encoded in the mitochondrial DNA, and 11 supernumerary subunits COX4I, COX5A, COX5B, COX6A, COX6B, COX6C, COX7A, COX7B, COX7C, COX8 and NDUFA4, which are encoded in the nuclear genome. The complex exists as a monomer or a dimer and forms supercomplexes (SCs) in the inner mitochondrial membrane with NADH-ubiquinone oxidoreductase (complex I, CI) and ubiquinol-cytochrome c oxidoreductase (cytochrome b-c1 complex, complex III, CIII), resulting in different assemblies (supercomplex SCI(1)III(2)IV(1) and megacomplex MCI(2)III(2)IV(2)). Found in a complex with TMEM177, COA6, COX18, COX20, SCO1 and SCO2. Interacts with TMEM177 in a COX20-dependent manner. Interacts with COX20. Interacts with COX16. Cu cation serves as cofactor.

The protein resides in the mitochondrion inner membrane. It carries out the reaction 4 Fe(II)-[cytochrome c] + O2 + 8 H(+)(in) = 4 Fe(III)-[cytochrome c] + 2 H2O + 4 H(+)(out). In terms of biological role, component of the cytochrome c oxidase, the last enzyme in the mitochondrial electron transport chain which drives oxidative phosphorylation. The respiratory chain contains 3 multisubunit complexes succinate dehydrogenase (complex II, CII), ubiquinol-cytochrome c oxidoreductase (cytochrome b-c1 complex, complex III, CIII) and cytochrome c oxidase (complex IV, CIV), that cooperate to transfer electrons derived from NADH and succinate to molecular oxygen, creating an electrochemical gradient over the inner membrane that drives transmembrane transport and the ATP synthase. Cytochrome c oxidase is the component of the respiratory chain that catalyzes the reduction of oxygen to water. Electrons originating from reduced cytochrome c in the intermembrane space (IMS) are transferred via the dinuclear copper A center (CU(A)) of subunit 2 and heme A of subunit 1 to the active site in subunit 1, a binuclear center (BNC) formed by heme A3 and copper B (CU(B)). The BNC reduces molecular oxygen to 2 water molecules using 4 electrons from cytochrome c in the IMS and 4 protons from the mitochondrial matrix. The sequence is that of Cytochrome c oxidase subunit 2 (MT-CO2) from Gerbilliscus robustus (Fringe-tailed gerbil).